Reading from the N-terminus, the 694-residue chain is Elongation factor G (694 aa).

Positions 8-287 constitute a tr-type G domain; it reads EDYRNFGIMA…AVVEFLPAPT (280 aa). Residues 17 to 24, 86 to 90, and 140 to 143 contribute to the GTP site; these read AHIDAGKT, DTPGH, and NKMD.

This sequence belongs to the TRAFAC class translation factor GTPase superfamily. Classic translation factor GTPase family. EF-G/EF-2 subfamily.

It localises to the cytoplasm. Functionally, catalyzes the GTP-dependent ribosomal translocation step during translation elongation. During this step, the ribosome changes from the pre-translocational (PRE) to the post-translocational (POST) state as the newly formed A-site-bound peptidyl-tRNA and P-site-bound deacylated tRNA move to the P and E sites, respectively. Catalyzes the coordinated movement of the two tRNA molecules, the mRNA and conformational changes in the ribosome. The chain is Elongation factor G from Brucella melitensis biotype 2 (strain ATCC 23457).